We begin with the raw amino-acid sequence, 880 residues long: Alanine--tRNA ligase (880 aa).

Belongs to the class-II aminoacyl-tRNA synthetase family.

Its subcellular location is the cytoplasm. It carries out the reaction tRNA(Ala) + L-alanine + ATP = L-alanyl-tRNA(Ala) + AMP + diphosphate. In terms of biological role, catalyzes the attachment of alanine to tRNA(Ala) in a two-step reaction: alanine is first activated by ATP to form Ala-AMP and then transferred to the acceptor end of tRNA(Ala). Also edits incorrectly charged Ser-tRNA(Ala) and Gly-tRNA(Ala) via its editing domain. The polypeptide is Alanine--tRNA ligase (alaS) (Lactiplantibacillus plantarum (strain ATCC BAA-793 / NCIMB 8826 / WCFS1) (Lactobacillus plantarum)).